The following is a 369-amino-acid chain: MDTLRYYLIPVVTACGLIGFYYGGYWVWLGAATFPALMVLDVILPKDFSARKVSPFFADLTQYLQLPLMIGLYGLLVFGVENGRIELSEPLQVAGCILSLAWLSGVPTLPVSHELMHRRHWLPRKMAQLLAMFYGDPNRDIAHVNTHHLYLDTPLDSDTPYRGQTIYSFVISATVGSVKDAIKIEAETLRRKGQSPWNLSNKTYQYVALLLALPGLVSYLGGPALGLVTIASMIIAKGIVEGFNYFQHYGLVRDLDQPILLHHAWNHMGTIVRPLGCEITNHINHHIDGYTRFYELRPEKEAPQMPSLFVCFLLGLIPPLWFALIAKPKLRDWDQRYATPGERELAMAANKKAGWPLWCESELGRVASI.

3 helical membrane passes run 8 to 28, 60 to 80, and 91 to 111; these read LIPV…YWVW, LTQY…VFGV, and LQVA…TLPV. Residues histidine 113, histidine 117, histidine 143, histidine 147, and histidine 148 each coordinate Fe cation. Residues 207–227 traverse the membrane as a helical segment; it reads VALLLALPGLVSYLGGPALGL. Fe cation contacts are provided by histidine 282, histidine 285, and histidine 286. The helical transmembrane segment at 305 to 325 threads the bilayer; the sequence is MPSLFVCFLLGLIPPLWFALI.

It belongs to the fatty acid desaturase type 1 family. AlkB subfamily. As to quaternary structure, the xylene/toluene monooxygenase is composed of two subunits: the electron transfer component XylA and the hydroxylase component XylM. Fe(2+) serves as cofactor.

The protein localises to the cell inner membrane. It catalyses the reaction m-xylene + 2 reduced [2Fe-2S]-[ferredoxin] + O2 + 2 H(+) = 3-methylbenzyl alcohol + 2 oxidized [2Fe-2S]-[ferredoxin] + H2O. The enzyme catalyses p-xylene + 2 reduced [2Fe-2S]-[ferredoxin] + O2 + 2 H(+) = 4-methylbenzyl alcohol + 2 oxidized [2Fe-2S]-[ferredoxin] + H2O. The catalysed reaction is toluene + 2 reduced [2Fe-2S]-[ferredoxin] + O2 + 2 H(+) = benzyl alcohol + 2 oxidized [2Fe-2S]-[ferredoxin] + H2O. In terms of biological role, component of a monooxygenase that catalyzes the first step in the degradation of xylenes and toluenes. XylM catalyzes the hydroxylation of the methyl side chain of xylenes and toluenes. The electrons are provided by the electron transfer component XylA. The best substrates are m-xylene and p-xylene, followed by toluene. Shows weak activity with o-xylene. In vitro, is also active with substituted compounds, such as chlorotoluenes. Cannot use benzyl alcohol. In Pseudomonas putida (Arthrobacter siderocapsulatus), this protein is Xylene/toluene monooxygenase hydroxylase component XylM.